A 145-amino-acid chain; its full sequence is MASLATVAAVKPSAAIKGLGGSSLAGAKLSIKPSRLSFKPKSIRANGVVAKYGDKSVYFDLEDLGNTTGQWDVYGSDAPSPYNPLQSKFFETFAAPFTKRGLLLKFLILGGGSLLTYVSATSTGEVLPIKRGPQEPPKLGPRGKL.

The N-terminal 50 residues, 1–50 (MASLATVAAVKPSAAIKGLGGSSLAGAKLSIKPSRLSFKPKSIRANGVVA), are a transit peptide targeting the chloroplast. A helical membrane pass occupies residues 102 to 118 (LLLKFLILGGGSLLTYV).

It belongs to the psaH family.

It is found in the plastid. The protein resides in the chloroplast thylakoid membrane. Possible role could be the docking of the LHC I antenna complex to the core complex. This Arabidopsis thaliana (Mouse-ear cress) protein is Photosystem I reaction center subunit VI-1, chloroplastic (PSAH1).